A 502-amino-acid polypeptide reads, in one-letter code: MSCPVPACCALLLVLGLCRARPRNALLLLADDGGFESGAYNNSAIATPHLDALARRSLLFRNAFTSVSSCSPSRASLLTGLPQHQNGMYGLHQDVHHFNSFDKVRSLPLLLSQAGVRTGIIGKKHVGPETVYPFDFAYTEENGSVLQVGRNITRIKLLVRKFLQTQDDRPFFLYVAFHDPHRCGHSQPQYGTFCEKFGNGESGMGRIPDWTPQAYDPLDVLVPYFVPNTPAARADLAAQYTTVGRMDQGVGLVLQELRDAGVLNDTLVIFTSDNGIPFPSGRTNLYWPGTAEPLLVSSPEHPKRWGQVSEAYVSLLDLTPTILDWFSIPYPSYAIFGSKTIHLTGRSLLPALEAEPLWATVFGSQSHHEVTMSYPMRSVQHRHFRLVHNLNFKMPFPIDQDFYVSPTFQDLLNRTTAGQPTGWYKDLRHYYYRARWELYDRSRDPHETQNLATDPRFAQLLEMLRDQLAKWQWETHDPWVCAPDGVLEEKLSPQCQPLHNEL.

The first 20 residues, Met-1 to Ala-20, serve as a signal peptide directing secretion. Ca(2+) is bound by residues Asp-31 and Asp-32. Residue Asn-41 is glycosylated (N-linked (GlcNAc...) asparagine). Cys-70 serves as a coordination point for Ca(2+). Cys-70 serves as the catalytic Nucleophile. Residue Cys-70 is modified to 3-oxoalanine (Cys). N-linked (GlcNAc...) asparagine glycosylation is found at Asn-142 and Asn-151. A disulfide bond links Cys-183 and Cys-194. N-linked (GlcNAc...) asparagine glycosylation is present at Asn-264. The Ca(2+) site is built by Asp-273 and Asn-274. Asn-413 carries an N-linked (GlcNAc...) asparagine glycan. Cys-481 and Cys-495 are oxidised to a cystine.

The protein belongs to the sulfatase family. It depends on Ca(2+) as a cofactor. In terms of processing, the conversion to 3-oxoalanine (also known as C-formylglycine, FGly), of a serine or cysteine residue in prokaryotes and of a cysteine residue in eukaryotes, is critical for catalytic activity.

It is found in the lysosome. It carries out the reaction N-sulfo-D-glucosamine + H2O = D-glucosamine + sulfate. In terms of biological role, catalyzes a step in lysosomal heparan sulfate degradation. In Homo sapiens (Human), this protein is N-sulphoglucosamine sulphohydrolase (SGSH).